The following is an 823-amino-acid chain: DNA ligase (823 aa).

NAD(+) is bound by residues 32–36, 81–82, and E121; these read DAEYD and SL. Residue K123 is the N6-AMP-lysine intermediate of the active site. Residues R144, E181, K299, and K323 each contribute to the NAD(+) site. Zn(2+)-binding residues include C449, C452, C467, and C473. The tract at residues 528-558 is disordered; sequence ETADKGSSENENGDAETVSGDLSKYNTQNGK. In terms of domain architecture, BRCT spans 746 to 823; sequence GINKAVAGKT…SEAELLTLLC (78 aa).

This sequence belongs to the NAD-dependent DNA ligase family. LigA subfamily. The cofactor is Mg(2+). Mn(2+) serves as cofactor.

The enzyme catalyses NAD(+) + (deoxyribonucleotide)n-3'-hydroxyl + 5'-phospho-(deoxyribonucleotide)m = (deoxyribonucleotide)n+m + AMP + beta-nicotinamide D-nucleotide.. Functionally, DNA ligase that catalyzes the formation of phosphodiester linkages between 5'-phosphoryl and 3'-hydroxyl groups in double-stranded DNA using NAD as a coenzyme and as the energy source for the reaction. It is essential for DNA replication and repair of damaged DNA. The protein is DNA ligase of Neisseria gonorrhoeae (strain NCCP11945).